A 227-amino-acid polypeptide reads, in one-letter code: Class I hydrophobin 4 (227 aa).

The N-terminal stretch at 1-18 (MQFTTFALLAVAAATASA) is a signal peptide. Intrachain disulfides connect Cys159–Cys207, Cys167–Cys200, Cys168–Cys186, and Cys208–Cys222. N-linked (GlcNAc...) asparagine glycosylation is found at Asn190 and Asn219.

This sequence belongs to the fungal hydrophobin family. Self-assembles to form functional amyloid fibrils called rodlets. Self-assembly into fibrillar rodlets occurs spontaneously at hydrophobic:hydrophilic interfaces and the rodlets further associate laterally to form amphipathic monolayers. As to expression, expressed in conidia and aerial hyphae.

It localises to the secreted. The protein localises to the cell wall. Its function is as follows. Aerial growth, conidiation, and dispersal of filamentous fungi in the environment rely upon a capability of their secreting small amphipathic proteins called hydrophobins (HPBs) with low sequence identity. Class I can self-assemble into an outermost layer of rodlet bundles on aerial cell surfaces, conferring cellular hydrophobicity that supports fungal growth, development and dispersal; whereas Class II form highly ordered films at water-air interfaces through intermolecular interactions but contribute nothing to the rodlet structure. Hcf-4 is a class I hydrophobin that is involved in the development and germination of conidia. The chain is Class I hydrophobin 4 from Passalora fulva (Tomato leaf mold).